The following is a 309-amino-acid chain: Type II methyltransferase M.HgiDI (309 aa).

An SAM-dependent MTase C5-type domain is found at 1–297; the sequence is MKTIDLFAGC…TSLQAYLNQP (297 aa). Cys75 is an active-site residue.

The protein belongs to the class I-like SAM-binding methyltransferase superfamily. C5-methyltransferase family.

It carries out the reaction a 2'-deoxycytidine in DNA + S-adenosyl-L-methionine = a 5-methyl-2'-deoxycytidine in DNA + S-adenosyl-L-homocysteine + H(+). A methylase that recognizes the double-stranded sequence 5'-GRCGYC-3', methylates C-? on both strands, and protects the DNA from cleavage by the HgiDI endonuclease. The sequence is that of Type II methyltransferase M.HgiDI from Herpetosiphon aurantiacus (Herpetosiphon giganteus).